Here is an 877-residue protein sequence, read N- to C-terminus: Phosphoenolpyruvate carboxylase (877 aa).

Catalysis depends on residues histidine 137 and lysine 542.

Belongs to the PEPCase type 1 family. Requires Mg(2+) as cofactor.

It carries out the reaction oxaloacetate + phosphate = phosphoenolpyruvate + hydrogencarbonate. Its function is as follows. Forms oxaloacetate, a four-carbon dicarboxylic acid source for the tricarboxylic acid cycle. This chain is Phosphoenolpyruvate carboxylase, found in Tolumonas auensis (strain DSM 9187 / NBRC 110442 / TA 4).